A 638-amino-acid chain; its full sequence is 1-deoxy-D-xylulose-5-phosphate synthase (638 aa).

Residues His78 and 119–121 contribute to the thiamine diphosphate site; that span reads AHS. Position 150 (Asp150) interacts with Mg(2+). Thiamine diphosphate-binding positions include 151-152, Asn179, Tyr288, and Glu370; that span reads GS. Asn179 contributes to the Mg(2+) binding site.

This sequence belongs to the transketolase family. DXPS subfamily. In terms of assembly, homodimer. Requires Mg(2+) as cofactor. The cofactor is thiamine diphosphate.

It carries out the reaction D-glyceraldehyde 3-phosphate + pyruvate + H(+) = 1-deoxy-D-xylulose 5-phosphate + CO2. It participates in metabolic intermediate biosynthesis; 1-deoxy-D-xylulose 5-phosphate biosynthesis; 1-deoxy-D-xylulose 5-phosphate from D-glyceraldehyde 3-phosphate and pyruvate: step 1/1. Catalyzes the acyloin condensation reaction between C atoms 2 and 3 of pyruvate and glyceraldehyde 3-phosphate to yield 1-deoxy-D-xylulose-5-phosphate (DXP). This is 1-deoxy-D-xylulose-5-phosphate synthase from Brucella anthropi (strain ATCC 49188 / DSM 6882 / CCUG 24695 / JCM 21032 / LMG 3331 / NBRC 15819 / NCTC 12168 / Alc 37) (Ochrobactrum anthropi).